The sequence spans 344 residues: Glycerol-3-phosphate dehydrogenase [NAD(P)+] (344 aa).

NADPH-binding residues include W18, H38, and K115. Residues K115, G144, and T146 each coordinate sn-glycerol 3-phosphate. A148 is an NADPH binding site. Residues K199, D252, S262, R263, and N264 each contribute to the sn-glycerol 3-phosphate site. K199 acts as the Proton acceptor in catalysis. Residue R263 coordinates NADPH. Residues V288 and E290 each contribute to the NADPH site.

The protein belongs to the NAD-dependent glycerol-3-phosphate dehydrogenase family.

The protein resides in the cytoplasm. The enzyme catalyses sn-glycerol 3-phosphate + NAD(+) = dihydroxyacetone phosphate + NADH + H(+). The catalysed reaction is sn-glycerol 3-phosphate + NADP(+) = dihydroxyacetone phosphate + NADPH + H(+). The protein operates within membrane lipid metabolism; glycerophospholipid metabolism. Functionally, catalyzes the reduction of the glycolytic intermediate dihydroxyacetone phosphate (DHAP) to sn-glycerol 3-phosphate (G3P), the key precursor for phospholipid synthesis. The sequence is that of Glycerol-3-phosphate dehydrogenase [NAD(P)+] from Hydrogenovibrio crunogenus (strain DSM 25203 / XCL-2) (Thiomicrospira crunogena).